The following is a 179-amino-acid chain: Peroxiredoxin (179 aa).

The Thioredoxin domain occupies 2–152; it reads TMEKQVPIVT…VEGWFEEEGF (151 aa). Cys56 functions as the Cysteine sulfenic acid (-SOH) intermediate (for peroxiredoxin activity) in the catalytic mechanism.

It belongs to the peroxiredoxin family. Prx5 subfamily. In terms of assembly, monomer.

It carries out the reaction a hydroperoxide + 2 glutathione = an alcohol + glutathione disulfide + H2O. Functionally, thiol-specific peroxidase that catalyzes the reduction of hydrogen peroxide and organic hydroperoxides to water and alcohols, respectively. Plays a role in cell protection against oxidative stress by detoxifying peroxides. This chain is Peroxiredoxin, found in Rhizobium etli.